The chain runs to 100 residues: Urease subunit gamma (100 aa).

Belongs to the urease gamma subunit family. As to quaternary structure, heterotrimer of UreA (gamma), UreB (beta) and UreC (alpha) subunits. Three heterotrimers associate to form the active enzyme.

The protein localises to the cytoplasm. It catalyses the reaction urea + 2 H2O + H(+) = hydrogencarbonate + 2 NH4(+). Its pathway is nitrogen metabolism; urea degradation; CO(2) and NH(3) from urea (urease route): step 1/1. The polypeptide is Urease subunit gamma (Dinoroseobacter shibae (strain DSM 16493 / NCIMB 14021 / DFL 12)).